Here is a 315-residue protein sequence, read N- to C-terminus: MVVSLAGRDVLCLQDFTREELETILKTAEMMKIWNKIGKPHRVLEGKTLAMIFQKPSTRTRISFEVGIYQLGGYGLYLNAQDLQLRRGETIADTARVLSRYVDGIMARVFDHKDVEDLAKYASVPVINGLSDFSHPCQALADYQTILEKKGRIQGLKIVYVGDGNNVAHSLMIAGTKLGANVVVATPEGYEPDPKVIKWAEQNAAESGGSFELLHDPVQAVKDADVIYTDVWASMGQEAEAEERRKIFMPFQVNKELVKHAKPDYIFMHCLPAHRGEEVTDDVIDSPNSVVFDQAENRLHAQKAVMALVMGGIKV.

Residues 57 to 60 (STRT), Gln84, Arg108, and 135 to 138 (HPCQ) each bind carbamoyl phosphate. Residues Asn166, Asp230, and 234-235 (SM) each bind L-ornithine. Carbamoyl phosphate contacts are provided by residues 270-271 (CL) and Arg298.

This sequence belongs to the aspartate/ornithine carbamoyltransferase superfamily. OTCase family.

It localises to the cytoplasm. The catalysed reaction is carbamoyl phosphate + L-ornithine = L-citrulline + phosphate + H(+). It functions in the pathway amino-acid biosynthesis; L-arginine biosynthesis; L-arginine from L-ornithine and carbamoyl phosphate: step 1/3. In terms of biological role, reversibly catalyzes the transfer of the carbamoyl group from carbamoyl phosphate (CP) to the N(epsilon) atom of ornithine (ORN) to produce L-citrulline. This chain is Ornithine carbamoyltransferase, found in Thermococcus kodakarensis (strain ATCC BAA-918 / JCM 12380 / KOD1) (Pyrococcus kodakaraensis (strain KOD1)).